A 213-amino-acid chain; its full sequence is Orotate phosphoribosyltransferase (213 aa).

A 5-phospho-alpha-D-ribose 1-diphosphate-binding site is contributed by K26. Position 34 to 35 (34 to 35) interacts with orotate; the sequence is FF. 5-phospho-alpha-D-ribose 1-diphosphate is bound by residues 72–73, R98, K99, K102, and 123–131; these read YK and DDVISAGTS. Residues S127 and R155 each coordinate orotate.

The protein belongs to the purine/pyrimidine phosphoribosyltransferase family. PyrE subfamily. As to quaternary structure, homodimer. It depends on Mg(2+) as a cofactor.

The catalysed reaction is orotidine 5'-phosphate + diphosphate = orotate + 5-phospho-alpha-D-ribose 1-diphosphate. Its pathway is pyrimidine metabolism; UMP biosynthesis via de novo pathway; UMP from orotate: step 1/2. Catalyzes the transfer of a ribosyl phosphate group from 5-phosphoribose 1-diphosphate to orotate, leading to the formation of orotidine monophosphate (OMP). This Neisseria gonorrhoeae (strain ATCC 700825 / FA 1090) protein is Orotate phosphoribosyltransferase.